The sequence spans 251 residues: 3-deoxy-manno-octulosonate cytidylyltransferase (251 aa).

This sequence belongs to the KdsB family.

The protein localises to the cytoplasm. It catalyses the reaction 3-deoxy-alpha-D-manno-oct-2-ulosonate + CTP = CMP-3-deoxy-beta-D-manno-octulosonate + diphosphate. It participates in nucleotide-sugar biosynthesis; CMP-3-deoxy-D-manno-octulosonate biosynthesis; CMP-3-deoxy-D-manno-octulosonate from 3-deoxy-D-manno-octulosonate and CTP: step 1/1. Its pathway is bacterial outer membrane biogenesis; lipopolysaccharide biosynthesis. Activates KDO (a required 8-carbon sugar) for incorporation into bacterial lipopolysaccharide in Gram-negative bacteria. The chain is 3-deoxy-manno-octulosonate cytidylyltransferase from Chlorobium luteolum (strain DSM 273 / BCRC 81028 / 2530) (Pelodictyon luteolum).